A 375-amino-acid polypeptide reads, in one-letter code: Serpin B5 (375 aa).

Residues Asn133, Asn298, and Asn361 are each glycosylated (N-linked (GlcNAc...) asparagine).

Belongs to the serpin family. Ov-serpin subfamily. Interacts with IRF6.

The protein resides in the secreted. It is found in the extracellular space. Its function is as follows. Tumor suppressor. It blocks the growth, invasion, and metastatic properties of mammary tumors. As it does not undergo the S (stressed) to R (relaxed) conformational transition characteristic of active serpins, it exhibits no serine protease inhibitory activity. The protein is Serpin B5 (Serpinb5) of Mus musculus (Mouse).